Consider the following 229-residue polypeptide: Potassium/proton antiporter CemA (229 aa).

3 helical membrane passes run 7 to 27 (LNPL…SLSF), 106 to 126 (IILH…YSIL), and 189 to 209 (IISG…KYWI).

It belongs to the CemA family.

It localises to the plastid. The protein resides in the chloroplast inner membrane. It catalyses the reaction K(+)(in) + H(+)(out) = K(+)(out) + H(+)(in). Contributes to K(+)/H(+) antiport activity by supporting proton efflux to control proton extrusion and homeostasis in chloroplasts in a light-dependent manner to modulate photosynthesis. Prevents excessive induction of non-photochemical quenching (NPQ) under continuous-light conditions. Indirectly promotes efficient inorganic carbon uptake into chloroplasts. In Nymphaea alba (White water-lily), this protein is Potassium/proton antiporter CemA.